A 115-amino-acid polypeptide reads, in one-letter code: NADH-ubiquinone oxidoreductase chain 3 (115 aa).

The next 3 membrane-spanning stretches (helical) occupy residues 3-23, 55-75, and 84-104; these read LFVALFINASLSFILISVAFW, FFLVAITFLLFDLEIALLLPL, and LSAMMITSFILISILALGLIY.

The protein belongs to the complex I subunit 3 family. Core subunit of respiratory chain NADH dehydrogenase (Complex I) which is composed of 45 different subunits. Interacts with TMEM186. Interacts with TMEM242.

It localises to the mitochondrion inner membrane. It catalyses the reaction a ubiquinone + NADH + 5 H(+)(in) = a ubiquinol + NAD(+) + 4 H(+)(out). Its function is as follows. Core subunit of the mitochondrial membrane respiratory chain NADH dehydrogenase (Complex I) which catalyzes electron transfer from NADH through the respiratory chain, using ubiquinone as an electron acceptor. Essential for the catalytic activity of complex I. The sequence is that of NADH-ubiquinone oxidoreductase chain 3 from Sigmodon hispidus (Hispid cotton rat).